Consider the following 552-residue polypeptide: Urocanate hydratase (552 aa).

NAD(+) contacts are provided by residues 50–51 (GG), Q128, 174–176 (GMG), E194, R199, 261–265 (QTSAH), 271–272 (YI), and Y320. Residue C408 is part of the active site. G490 is an NAD(+) binding site.

The protein belongs to the urocanase family. NAD(+) serves as cofactor.

The protein resides in the cytoplasm. The enzyme catalyses 4-imidazolone-5-propanoate = trans-urocanate + H2O. It functions in the pathway amino-acid degradation; L-histidine degradation into L-glutamate; N-formimidoyl-L-glutamate from L-histidine: step 2/3. Catalyzes the conversion of urocanate to 4-imidazolone-5-propionate. This is Urocanate hydratase from Bdellovibrio bacteriovorus (strain ATCC 15356 / DSM 50701 / NCIMB 9529 / HD100).